We begin with the raw amino-acid sequence, 356 residues long: Cytochrome c oxidase subunit 2 (356 aa).

An N-terminal signal peptide occupies residues 1–23 (MNKGLCNWRLFSLFGMMALLLAG). Residues 24 to 259 (CGKPFLSTLQ…QNAKKPVVTD (236 aa)) form a cytochrome c oxidase subunit II region. 2 helical membrane-spanning segments follow: residues 45-65 (LMLL…IIFV) and 93-113 (IIWT…TVLT). Cu cation-binding residues include His178, Cys219, Cys223, and His227. Residues 260–356 (PVAKEGEAIF…TKYLMSLKVE (97 aa)) enclose the Cytochrome c domain. Heme c is bound by residues Cys273, Cys276, His277, and Met331.

This sequence belongs to the cytochrome c oxidase subunit 2 family. Requires Cu cation as cofactor. The cofactor is heme c.

The protein localises to the cell membrane. It carries out the reaction 4 Fe(II)-[cytochrome c] + O2 + 8 H(+)(in) = 4 Fe(III)-[cytochrome c] + 2 H2O + 4 H(+)(out). Functionally, subunits I and II form the functional core of the enzyme complex. Electrons originating in cytochrome c are transferred via heme a and Cu(A) to the binuclear center formed by heme a3 and Cu(B). The chain is Cytochrome c oxidase subunit 2 (ctaC) from Bacillus sp. (strain PS3).